The chain runs to 732 residues: Catalase-peroxidase (732 aa).

Residues 97 to 220 constitute a cross-link (tryptophyl-tyrosyl-methioninium (Trp-Tyr) (with M-246)); it reads WHSAGTYRTS…LAAVQMGLIY (124 aa). H98 (proton acceptor) is an active-site residue. The tryptophyl-tyrosyl-methioninium (Tyr-Met) (with W-97) cross-link spans 220–246; the sequence is YVNPEGPDGNPDPVAAGRDIRETFARM. H261 provides a ligand contact to heme b.

The protein belongs to the peroxidase family. Peroxidase/catalase subfamily. In terms of assembly, homodimer or homotetramer. Requires heme b as cofactor. Formation of the three residue Trp-Tyr-Met cross-link is important for the catalase, but not the peroxidase activity of the enzyme.

It carries out the reaction H2O2 + AH2 = A + 2 H2O. The enzyme catalyses 2 H2O2 = O2 + 2 H2O. In terms of biological role, bifunctional enzyme with both catalase and broad-spectrum peroxidase activity. This Chlorobium phaeobacteroides (strain DSM 266 / SMG 266 / 2430) protein is Catalase-peroxidase.